Consider the following 71-residue polypeptide: Small ribosomal subunit protein bS18 (71 aa).

Belongs to the bacterial ribosomal protein bS18 family. Part of the 30S ribosomal subunit. Forms a tight heterodimer with protein bS6.

Binds as a heterodimer with protein bS6 to the central domain of the 16S rRNA, where it helps stabilize the platform of the 30S subunit. The chain is Small ribosomal subunit protein bS18 from Acaryochloris marina (strain MBIC 11017).